The chain runs to 378 residues: Circumsporozoite protein (378 aa).

Residues 1–22 (MKNFILLAVSSILLVDLFPTHC) form the signal peptide. Positions 51 to 295 (HVGQSASRGR…NNEGANAPNE (245 aa)) are disordered. A compositionally biased stretch (basic and acidic residues) spans 72–100 (DAKKKKDGKKAEPKNPRENKLKQPGDRAD). The tract at residues 80 to 88 (KKAEPKNPR) is required for the binding to heparan sulfate proteoglycans (HSPGs) on the surface of host hepatocytes. The interval 91–95 (KLKQP) is region I; contains the proteolytic cleavage site. 19 repeat units span residues 95–103 (PGDRADGQP), 104–112 (AGDRADGQP), 113–121 (AGDRADGQP), 122–130 (AGDRAAGQP), 131–139 (AGDRADGQP), 140–148 (AGDRADGQP), 149–157 (AGDRADGQP), 158–166 (AGDRADGQP), 167–175 (AGDRAAGQP), 176–184 (AGDRAAGQP), 185–193 (AGDRADGQP), 194–202 (AGDRAAGQP), 203–211 (AGDRADGQP), 212–220 (AGDRAAGQP), 221–229 (AGDRADGQP), 230–238 (AGDRAAGQP), 239–247 (AGDRAAGQP), 248–256 (AGDRAAGQP), and 257–265 (AGDRAAGQP). The tract at residues 95–265 (PGDRADGQPA…PAGDRAAGQP (171 aa)) is 19 X 9 AA tandem repeats of [PA]-G-D-R-A-[DA]-G-Q-P. The span at 266-284 (AGNGAGGQAAGGNAGGGQG) shows a compositional bias: gly residues. The span at 285–295 (QNNEGANAPNE) shows a compositional bias: low complexity. In terms of domain architecture, TSP type-1 spans 304 to 356 (KVRATVGTEWTPCSVTCGVGVRVRRRVNAANKKPEDLTLNDLETDVCTMDKCA). Intrachain disulfides connect cysteine 316-cysteine 350 and cysteine 320-cysteine 355. A glycan (O-linked (Fuc) threonine) is linked at threonine 319. Cysteine 355 carries the GPI-anchor amidated cysteine lipid modification. Residues 356–378 (AGIFNVVSNSLGLVILLVLALFN) constitute a propeptide, removed in mature form.

It belongs to the plasmodium circumsporozoite protein family. Post-translationally, during host cell invasion, proteolytically cleaved at the cell membrane in the region I by a papain-like cysteine protease of parasite origin. Cleavage is triggered by the sporozoite contact with highly sulfated heparan sulfate proteoglycans (HSPGs) present on the host hepatocyte cell surface. Cleavage exposes the TSP type-1 (TSR) domain and is required for productive invasion of host hepatocytes but not for adhesion to the host cell membrane. Cleavage is dispensable for sporozoite development in the oocyst, motility and for traversal of host and vector cells. In terms of processing, O-glycosylated; maybe by POFUT2.

The protein resides in the cell membrane. It is found in the cytoplasm. Essential sporozoite protein. In the mosquito vector, required for sporozoite development in the oocyst, migration through the vector hemolymph and entry into the vector salivary glands. In the vertebrate host, required for sporozoite migration through the host dermis and infection of host hepatocytes. Binds to highly sulfated heparan sulfate proteoglycans (HSPGs) on the surface of host hepatocytes. Its function is as follows. In the vertebrate host, binds to highly sulfated heparan sulfate proteoglycans (HSPGs) on the surface of host hepatocytes and is required for sporozoite invasion of the host hepatocytes. This chain is Circumsporozoite protein, found in Plasmodium vivax (strain Belem).